The following is a 934-amino-acid chain: Pesticidal crystal protein Cry1Aa (934 aa).

This sequence belongs to the delta endotoxin family.

Its function is as follows. Promotes colloidosmotic lysis by binding to the midgut epithelial cells of many lepidopteran larvae. The chain is Pesticidal crystal protein Cry1Aa (cry1Aa) from Bacillus thuringiensis subsp. sotto.